We begin with the raw amino-acid sequence, 866 residues long: DNA mismatch repair protein MutS (866 aa).

Residue 613–620 coordinates ATP; sequence GPNMGGKS.

Belongs to the DNA mismatch repair MutS family.

Functionally, this protein is involved in the repair of mismatches in DNA. It is possible that it carries out the mismatch recognition step. This protein has a weak ATPase activity. The chain is DNA mismatch repair protein MutS from Haemophilus ducreyi (strain 35000HP / ATCC 700724).